The primary structure comprises 96 residues: Putative pterin-4-alpha-carbinolamine dehydratase (96 aa).

The protein belongs to the pterin-4-alpha-carbinolamine dehydratase family.

The enzyme catalyses (4aS,6R)-4a-hydroxy-L-erythro-5,6,7,8-tetrahydrobiopterin = (6R)-L-erythro-6,7-dihydrobiopterin + H2O. The polypeptide is Putative pterin-4-alpha-carbinolamine dehydratase (Prochlorococcus marinus (strain MIT 9215)).